The primary structure comprises 167 residues: MQEFYSFSPIDENGNPFPFNSLRNKVVLIVNVASHCAFTPQYKELEYLYEKYKSHGLVIVAFPCGQFGNQEFEKDKEINKFCQDKYGVTFPILHKIRCNGQKQDPVYKFLKNSVSGKSGIKMIKWNFEKFVVDRNGKVVKRFSCMTRPLELCPIIEELLNQPPEEQI.

Cys36 functions as the Cysteine sulfenic acid (-SOH) intermediate in the catalytic mechanism. A disulfide bridge links Cys36 with Cys82.

It belongs to the glutathione peroxidase family. Monomer.

Its subcellular location is the peroxisome matrix. The protein localises to the mitochondrion outer membrane. It carries out the reaction 2 glutathione + H2O2 = glutathione disulfide + 2 H2O. The enzyme catalyses a hydroperoxide + [thioredoxin]-dithiol = an alcohol + [thioredoxin]-disulfide + H2O. Functionally, glutathione peroxidase-like protein that protects cells from phospholipid hydroperoxides and nonphospholipid peroxides during oxidative stress. Has peroxidase activity using thioredoxin or glutathione as a reducing power. Involved in peroxisome formation. In Saccharomyces cerevisiae (strain ATCC 204508 / S288c) (Baker's yeast), this protein is Glutathione peroxidase-like peroxiredoxin 1.